The sequence spans 218 residues: Glutathione S-transferase A (218 aa).

Position 1 is an N-acetylserine (S1). The 81-residue stretch at 2 to 82 (GKPVLHYFNV…YIATKYNLYG (81 aa)) folds into the GST N-terminal domain. K3 carries the N6-succinyllysine modification. Glutathione contacts are provided by residues Y8, K44, 53–54 (QV), and 66–67 (QS). A GST C-terminal domain is found at 84–206 (DTKERLLIDM…LQPGSQRKPF (123 aa)).

It belongs to the GST superfamily. Alpha family. In terms of assembly, homodimer or heterodimer of GSTA1 and GSTA2.

The protein resides in the cytoplasm. It catalyses the reaction RX + glutathione = an S-substituted glutathione + a halide anion + H(+). The enzyme catalyses prostaglandin A2 + glutathione = prostaglandin A2-S-(R)-glutathione. It carries out the reaction prostaglandin J2 + glutathione = prostaglandin J2-S-(R)-glutathione. The catalysed reaction is (13S)-hydroperoxy-(9Z,11E)-octadecadienoate + 2 glutathione = (13S)-hydroxy-(9Z,11E)-octadecadienoate + glutathione disulfide + H2O. It catalyses the reaction androst-5-ene-3,17-dione = androst-4-ene-3,17-dione. Its function is as follows. Glutathione S-transferase that catalyzes the nucleophilic attack of the sulfur atom of glutathione on the electrophilic groups of a wide range of exogenous and endogenous compounds. Involved in the formation of glutathione conjugates of both prostaglandin A2 (PGA2) and prostaglandin J2 (PGJ2). It also catalyzes the isomerization of D5-androstene-3,17-dione (AD) into D4-androstene-3,17-dione and may therefore play an important role in hormone biosynthesis. Through its glutathione-dependent peroxidase activity toward the fatty acid hydroperoxide (13S)-hydroperoxy-(9Z,11E)-octadecadienoate/13-HPODE it is also involved in the metabolism of oxidized linoleic acid. The chain is Glutathione S-transferase A from Cavia porcellus (Guinea pig).